Reading from the N-terminus, the 215-residue chain is uncharacterized protein (215 aa).

3 residues coordinate S-adenosyl-L-methionine: Gly-53, Glu-74, and Asp-97.

This sequence belongs to the methyltransferase superfamily. YrrT family.

Functionally, could be a S-adenosyl-L-methionine-dependent methyltransferase. This is an uncharacterized protein from Geobacillus thermodenitrificans (strain NG80-2).